Consider the following 638-residue polypeptide: Probable potassium transport system protein Kup (638 aa).

Transmembrane regions (helical) follow at residues 25–45, 65–85, 114–134, 152–172, 184–204, 226–246, 262–282, 291–311, 352–372, 382–402, 410–430, and 434–454; these read LAIA…LYSL, VISL…LLFV, AGAL…DAVI, PHLS…LFWI, FGPI…YHIV, LLQA…AEAL, AYGL…ALLI, PFFL…STVA, IYVP…VIGF, YGIA…VVMV, LLVG…FGAN, and VAQG…LLMT.

This sequence belongs to the HAK/KUP transporter (TC 2.A.72) family.

It is found in the cell inner membrane. It catalyses the reaction K(+)(in) + H(+)(in) = K(+)(out) + H(+)(out). Functionally, transport of potassium into the cell. Likely operates as a K(+):H(+) symporter. The chain is Probable potassium transport system protein Kup from Burkholderia lata (strain ATCC 17760 / DSM 23089 / LMG 22485 / NCIMB 9086 / R18194 / 383).